The following is a 297-amino-acid chain: Protein MIZU-KUSSEI 1 (297 aa).

Expressed in root meristematic region, cortical cells, lateral root cap cells, columella cells of the root cap, mature region of the roots and leaf hydathodes.

It is found in the endoplasmic reticulum membrane. Plays a role in lateral root development by maintaining auxin levels. This function requires GNOM (GN/MIZ2) activity. Negatively regulates cytokinin sensitivity on root development. Positively regulates hydrotropism in roots. The sequence is that of Protein MIZU-KUSSEI 1 (MIZ1) from Arabidopsis thaliana (Mouse-ear cress).